Consider the following 330-residue polypeptide: Glucan endo-1,3-beta-glucosidase GIII (330 aa).

An N-terminal signal peptide occupies residues 1-25 (MARKGVDVAVALVLVALAAFPAVHS). The active-site Proton donor is glutamate 117. Glutamate 255 serves as the catalytic Nucleophile.

Belongs to the glycosyl hydrolase 17 family.

It catalyses the reaction Hydrolysis of (1-&gt;3)-beta-D-glucosidic linkages in (1-&gt;3)-beta-D-glucans.. Functionally, may provide a degree of protection against microbial invasion of germinated barley grain through its ability to degrade fungal cell wall polysaccharides. The polypeptide is Glucan endo-1,3-beta-glucosidase GIII (Hordeum vulgare (Barley)).